Consider the following 523-residue polypeptide: Histidine ammonia-lyase (523 aa).

A cross-link (5-imidazolinone (Ala-Gly)) is located at residues 148 to 150 (ASG). Ser149 bears the 2,3-didehydroalanine (Ser) mark.

The protein belongs to the PAL/histidase family. Contains an active site 4-methylidene-imidazol-5-one (MIO), which is formed autocatalytically by cyclization and dehydration of residues Ala-Ser-Gly.

Its subcellular location is the cytoplasm. The enzyme catalyses L-histidine = trans-urocanate + NH4(+). Its pathway is amino-acid degradation; L-histidine degradation into L-glutamate; N-formimidoyl-L-glutamate from L-histidine: step 1/3. The sequence is that of Histidine ammonia-lyase from Chloroflexus aurantiacus (strain ATCC 29366 / DSM 635 / J-10-fl).